We begin with the raw amino-acid sequence, 401 residues long: Imidazolonepropionase (401 aa).

Fe(3+) contacts are provided by histidine 66 and histidine 68. Zn(2+)-binding residues include histidine 66 and histidine 68. The 4-imidazolone-5-propanoate site is built by arginine 75, tyrosine 138, and histidine 171. An N-formimidoyl-L-glutamate-binding site is contributed by tyrosine 138. Histidine 236 is a Fe(3+) binding site. Histidine 236 serves as a coordination point for Zn(2+). Glutamine 239 is a binding site for 4-imidazolone-5-propanoate. Aspartate 311 provides a ligand contact to Fe(3+). Aspartate 311 contributes to the Zn(2+) binding site. N-formimidoyl-L-glutamate-binding residues include asparagine 313 and glycine 315. Threonine 316 provides a ligand contact to 4-imidazolone-5-propanoate.

This sequence belongs to the metallo-dependent hydrolases superfamily. HutI family. It depends on Zn(2+) as a cofactor. Fe(3+) serves as cofactor.

The protein resides in the cytoplasm. The catalysed reaction is 4-imidazolone-5-propanoate + H2O = N-formimidoyl-L-glutamate. Its pathway is amino-acid degradation; L-histidine degradation into L-glutamate; N-formimidoyl-L-glutamate from L-histidine: step 3/3. In terms of biological role, catalyzes the hydrolytic cleavage of the carbon-nitrogen bond in imidazolone-5-propanoate to yield N-formimidoyl-L-glutamate. It is the third step in the universal histidine degradation pathway. This chain is Imidazolonepropionase, found in Pseudomonas putida (strain GB-1).